The chain runs to 398 residues: Protein-glutamate methylesterase/protein-glutamine glutaminase (398 aa).

Residues Lys-4 to Leu-121 enclose the Response regulatory domain. Asp-55 bears the 4-aspartylphosphate mark. The disordered stretch occupies residues Arg-133–Ser-200. Polar residues-rich tracts occupy residues Arg-136 to Ile-146 and Arg-168 to Ser-200. Positions Ser-205–Gly-398 constitute a CheB-type methylesterase domain. Residues Ser-217, His-244, and Asp-340 contribute to the active site.

Belongs to the CheB family. In terms of processing, phosphorylated by CheA. Phosphorylation of the N-terminal regulatory domain activates the methylesterase activity.

Its subcellular location is the cytoplasm. It catalyses the reaction [protein]-L-glutamate 5-O-methyl ester + H2O = L-glutamyl-[protein] + methanol + H(+). It carries out the reaction L-glutaminyl-[protein] + H2O = L-glutamyl-[protein] + NH4(+). Its function is as follows. Involved in chemotaxis. Part of a chemotaxis signal transduction system that modulates chemotaxis in response to various stimuli. Catalyzes the demethylation of specific methylglutamate residues introduced into the chemoreceptors (methyl-accepting chemotaxis proteins or MCP) by CheR. Also mediates the irreversible deamidation of specific glutamine residues to glutamic acid. This is Protein-glutamate methylesterase/protein-glutamine glutaminase from Shewanella frigidimarina (strain NCIMB 400).